Here is an 88-residue protein sequence, read N- to C-terminus: Apolipoprotein C-I (88 aa).

The first 26 residues, 1–26 (MRLFIALPVLIVVVAMALEGPAPAQA), serve as a signal peptide directing secretion.

Belongs to the apolipoprotein C1 family.

It localises to the secreted. Its function is as follows. Inhibitor of lipoprotein binding to the low density lipoprotein (LDL) receptor, LDL receptor-related protein, and very low density lipoprotein (VLDL) receptor. Associates with high density lipoproteins (HDL) and the triacylglycerol-rich lipoproteins in the plasma and makes up about 10% of the protein of the VLDL and 2% of that of HDL. Appears to interfere directly with fatty acid uptake and is also the major plasma inhibitor of cholesteryl ester transfer protein (CETP). Modulates the interaction of APOE with beta-migrating VLDL and inhibits binding of beta-VLDL to the LDL receptor-related protein. Binds free fatty acids and reduces their intracellular esterification. The polypeptide is Apolipoprotein C-I (Apoc1) (Grammomys surdaster (African woodland thicket rat)).